Consider the following 372-residue polypeptide: Queuine tRNA-ribosyltransferase (372 aa).

Catalysis depends on D92, which acts as the Proton acceptor. Substrate-binding positions include 92–96, D146, Q188, and G215; that span reads DSGGY. The segment at 246–252 is RNA binding; that stretch reads GIGSLRE. The Nucleophile role is filled by D265. The segment at 270–274 is RNA binding; important for wobble base 34 recognition; the sequence is TRLGR. Residues C303, C305, C308, and H334 each contribute to the Zn(2+) site.

It belongs to the queuine tRNA-ribosyltransferase family. Homodimer. Within each dimer, one monomer is responsible for RNA recognition and catalysis, while the other monomer binds to the replacement base PreQ1. The cofactor is Zn(2+).

It carries out the reaction 7-aminomethyl-7-carbaguanine + guanosine(34) in tRNA = 7-aminomethyl-7-carbaguanosine(34) in tRNA + guanine. The protein operates within tRNA modification; tRNA-queuosine biosynthesis. Functionally, catalyzes the base-exchange of a guanine (G) residue with the queuine precursor 7-aminomethyl-7-deazaguanine (PreQ1) at position 34 (anticodon wobble position) in tRNAs with GU(N) anticodons (tRNA-Asp, -Asn, -His and -Tyr). Catalysis occurs through a double-displacement mechanism. The nucleophile active site attacks the C1' of nucleotide 34 to detach the guanine base from the RNA, forming a covalent enzyme-RNA intermediate. The proton acceptor active site deprotonates the incoming PreQ1, allowing a nucleophilic attack on the C1' of the ribose to form the product. After dissociation, two additional enzymatic reactions on the tRNA convert PreQ1 to queuine (Q), resulting in the hypermodified nucleoside queuosine (7-(((4,5-cis-dihydroxy-2-cyclopenten-1-yl)amino)methyl)-7-deazaguanosine). The protein is Queuine tRNA-ribosyltransferase of Prochlorococcus marinus subsp. pastoris (strain CCMP1986 / NIES-2087 / MED4).